Here is a 246-residue protein sequence, read N- to C-terminus: 14-3-3 protein eta (246 aa).

An N-acetylglycine modification is found at Gly-2. Residues Ser-25 and Ser-59 each carry the phosphoserine modification.

Belongs to the 14-3-3 family. As to quaternary structure, homodimer. Interacts with many nuclear hormone receptors and cofactors including AR, ESR1, ESR2, MC2R, NR3C1, NRIP1, PPARBP and THRA. Interacts with ABL1 (phosphorylated form); the interaction retains it in the cytoplasm. Weakly interacts with CDKN1B. Interacts with ARHGEF28 and CDK16. Interacts with GAB2. Interacts with KCNK18 in a phosphorylation-dependent manner. Interacts with SAMSN1. Interacts with the 'Ser-241' phosphorylated form of PDPK1. Interacts with the 'Thr-369' phosphorylated form of DAPK2. Interacts with PI4KB, TBC1D22A and TBC1D22B. Interacts with SLITRK1. Interacts with MEFV. Post-translationally, phosphorylated on Ser-59 by protein kinase C delta type catalytic subunit in a sphingosine-dependent fashion.

The protein localises to the cytoplasm. Its function is as follows. Adapter protein implicated in the regulation of a large spectrum of both general and specialized signaling pathways. Binds to a large number of partners, usually by recognition of a phosphoserine or phosphothreonine motif. Binding generally results in the modulation of the activity of the binding partner. Negatively regulates the kinase activity of PDPK1. This chain is 14-3-3 protein eta (YWHAH), found in Bos taurus (Bovine).